The sequence spans 598 residues: MKNIRNFSIIAHIDHGKSTLSDRLIQTCGGLSDREMEAQVLDSMDLERERGITIKAQSVTLNYKAKDGETYQLNFIDTPGHVDFSYEVSRSLAACEGALLVVDAGQGVEAQTLANCYTAIEMDLEVVPILNKIDLPAADPERVAEEIEDIVGIDAMEAVRCSAKTGVGIEDVLEEIVAKIPAPEGDPNAPLQALIIDSWFDNYLGVVSLVRIKNGVLRKGDKIKVMSTGQTYNVDRLGIFTPKQEDTTVLECGEVGWVVCAIKDILGAPVGDTLTHQHNSATEVLPGFKKVKPQVYAGLFPVSSDDYEAFRDALGKLSLNDASLFYEPETSTALGFGFRCGFLGLLHMEIIQERLEREYDLDLITTAPTVIYEVQLTNGEVVYVDSPAKLPPLNNIAEIREPIAECNMLVPQEYLGNVITLCVEKRGVQTNMVYHGNQIALTYEIPMGEVVLDFFDRLKSTSRGYASLDYGFKRFQAADMVRVDIMINSERVDALALIVHKDNSQYRGRELVEKMRELIPRQQFDIAIQAAIGNHIIARSTVKQLRKNVLAKCYGGDVSRKKKLLQKQKEGKKRMKSLGNVEVPQEAFLAILHVGKDK.

One can recognise a tr-type G domain in the interval 2–184 (KNIRNFSIIA…EIVAKIPAPE (183 aa)). GTP contacts are provided by residues 14–19 (DHGKST) and 131–134 (NKID).

The protein belongs to the TRAFAC class translation factor GTPase superfamily. Classic translation factor GTPase family. LepA subfamily.

Its subcellular location is the cell inner membrane. It catalyses the reaction GTP + H2O = GDP + phosphate + H(+). Required for accurate and efficient protein synthesis under certain stress conditions. May act as a fidelity factor of the translation reaction, by catalyzing a one-codon backward translocation of tRNAs on improperly translocated ribosomes. Back-translocation proceeds from a post-translocation (POST) complex to a pre-translocation (PRE) complex, thus giving elongation factor G a second chance to translocate the tRNAs correctly. Binds to ribosomes in a GTP-dependent manner. In Haemophilus influenzae (strain 86-028NP), this protein is Elongation factor 4.